The sequence spans 229 residues: Histidine biosynthesis bifunctional protein HisIE (229 aa).

The interval 1 to 127 is phosphoribosyl-AMP cyclohydrolase; it reads MNTLLDGIDW…APDTSALYGV (127 aa). The interval 128–229 is phosphoribosyl-ATP pyrophosphohydrolase; the sequence is VDRLYHELLA…IAEKNSRKDS (102 aa).

The protein in the N-terminal section; belongs to the PRA-CH family. This sequence in the C-terminal section; belongs to the PRA-PH family.

The protein resides in the cytoplasm. The catalysed reaction is 1-(5-phospho-beta-D-ribosyl)-ATP + H2O = 1-(5-phospho-beta-D-ribosyl)-5'-AMP + diphosphate + H(+). It catalyses the reaction 1-(5-phospho-beta-D-ribosyl)-5'-AMP + H2O = 1-(5-phospho-beta-D-ribosyl)-5-[(5-phospho-beta-D-ribosylamino)methylideneamino]imidazole-4-carboxamide. It participates in amino-acid biosynthesis; L-histidine biosynthesis; L-histidine from 5-phospho-alpha-D-ribose 1-diphosphate: step 2/9. The protein operates within amino-acid biosynthesis; L-histidine biosynthesis; L-histidine from 5-phospho-alpha-D-ribose 1-diphosphate: step 3/9. This is Histidine biosynthesis bifunctional protein HisIE from Wolinella succinogenes (strain ATCC 29543 / DSM 1740 / CCUG 13145 / JCM 31913 / LMG 7466 / NCTC 11488 / FDC 602W) (Vibrio succinogenes).